Here is a 363-residue protein sequence, read N- to C-terminus: Flagellar P-ring protein (363 aa).

Positions 1–21 (MKTVINIFILFTFLASLSANA) are cleaved as a signal peptide.

It belongs to the FlgI family. As to quaternary structure, the basal body constitutes a major portion of the flagellar organelle and consists of four rings (L,P,S, and M) mounted on a central rod.

It localises to the periplasm. It is found in the bacterial flagellum basal body. Assembles around the rod to form the L-ring and probably protects the motor/basal body from shearing forces during rotation. This chain is Flagellar P-ring protein, found in Colwellia psychrerythraea (strain 34H / ATCC BAA-681) (Vibrio psychroerythus).